We begin with the raw amino-acid sequence, 539 residues long: Eukaryotic translation initiation factor 3 subunit L (539 aa).

The 209-residue stretch at 306–514 folds into the PCI domain; the sequence is TFSDILLYIQ…IHIADTKVSH (209 aa).

The protein belongs to the eIF-3 subunit L family. In terms of assembly, component of the eukaryotic translation initiation factor 3 (eIF-3) complex. The eIF-3 complex interacts with pix.

The protein localises to the cytoplasm. Component of the eukaryotic translation initiation factor 3 (eIF-3) complex, which is involved in protein synthesis of a specialized repertoire of mRNAs and, together with other initiation factors, stimulates binding of mRNA and methionyl-tRNAi to the 40S ribosome. The eIF-3 complex specifically targets and initiates translation of a subset of mRNAs involved in cell proliferation. The sequence is that of Eukaryotic translation initiation factor 3 subunit L from Drosophila melanogaster (Fruit fly).